The primary structure comprises 316 residues: Small kinetochore-associated protein (316 aa).

Ser128 bears the Phosphoserine mark. Residues 159–316 (VRKGYKPLSK…LKEMEQLLEM (158 aa)) are interaction with SPAG5. Coiled coils occupy residues 166–216 (LSKQ…FRDN) and 248–316 (SMLL…LLEM).

As to quaternary structure, part of an astrin (SPAG5)-kinastrin (SKAP) complex containing KNSTRN, SPAG5, PLK1, DYNLL1 and SGO2. Interacts with SPAG5. Directly binds to microtubules, although at relatively low affinity. Interacts with CENPE; this interaction greatly favors microtubule-binding. Interacts with DSN1/MIS13; leading to localization to kinetochores. Interacts with MAPRE1/EB1; leading to localization to the microtubule plus ends. Interacts with PRPF19. Interacts with DYNLL1. Interacts with MAP4. As to expression, widely expressed, including in skin.

The protein localises to the nucleus. The protein resides in the chromosome. Its subcellular location is the centromere. It localises to the kinetochore. It is found in the cytoplasm. The protein localises to the cytoskeleton. The protein resides in the spindle pole. Its subcellular location is the microtubule organizing center. In terms of biological role, essential component of the mitotic spindle required for faithful chromosome segregation and progression into anaphase. Promotes the metaphase-to-anaphase transition and is required for chromosome alignment, normal timing of sister chromatid segregation, and maintenance of spindle pole architecture. The astrin (SPAG5)-kinastrin (SKAP) complex promotes stable microtubule-kinetochore attachments. Required for kinetochore oscillations and dynamics of microtubule plus-ends during live cell mitosis, possibly by forming a link between spindle microtubule plus-ends and mitotic chromosomes to achieve faithful cell division. May be involved in UV-induced apoptosis via its interaction with PRPF19; however, these results need additional evidences. This Homo sapiens (Human) protein is Small kinetochore-associated protein.